We begin with the raw amino-acid sequence, 117 residues long: Large ribosomal subunit protein bL20 (117 aa).

It belongs to the bacterial ribosomal protein bL20 family.

Functionally, binds directly to 23S ribosomal RNA and is necessary for the in vitro assembly process of the 50S ribosomal subunit. It is not involved in the protein synthesizing functions of that subunit. The sequence is that of Large ribosomal subunit protein bL20 from Campylobacter hominis (strain ATCC BAA-381 / DSM 21671 / CCUG 45161 / LMG 19568 / NCTC 13146 / CH001A).